A 380-amino-acid chain; its full sequence is Cytochrome b (380 aa).

4 helical membrane passes run 34–54 (FGSLLGICLVTQIITGLLLAA), 78–99 (WLIRNLHANGASLFFICIYLHI), 114–134 (WNIGVILLLTLMATAFVGYVL), and 179–199 (FFALHFLLPFVIAGLTLVHLT). 2 residues coordinate heme b: H84 and H98. Heme b is bound by residues H183 and H197. H202 contacts a ubiquinone. 4 helical membrane-spanning segments follow: residues 227–247 (IKDILGFALMLISLATLALFS), 289–309 (LGGVLALAASVLILFLIPLLH), 321–341 (LSQILFWILVTDLLILTWVGS), and 348–368 (FIIIGQLASFSYFMIILVLFP).

This sequence belongs to the cytochrome b family. As to quaternary structure, the cytochrome bc1 complex contains 11 subunits: 3 respiratory subunits (MT-CYB, CYC1 and UQCRFS1), 2 core proteins (UQCRC1 and UQCRC2) and 6 low-molecular weight proteins (UQCRH/QCR6, UQCRB/QCR7, UQCRQ/QCR8, UQCR10/QCR9, UQCR11/QCR10 and a cleavage product of UQCRFS1). This cytochrome bc1 complex then forms a dimer. Requires heme b as cofactor.

The protein localises to the mitochondrion inner membrane. In terms of biological role, component of the ubiquinol-cytochrome c reductase complex (complex III or cytochrome b-c1 complex) that is part of the mitochondrial respiratory chain. The b-c1 complex mediates electron transfer from ubiquinol to cytochrome c. Contributes to the generation of a proton gradient across the mitochondrial membrane that is then used for ATP synthesis. This chain is Cytochrome b (MT-CYB), found in Paradisaea rubra (Red bird of paradise).